The sequence spans 148 residues: Large-conductance mechanosensitive channel (148 aa).

The next 2 helical transmembrane spans lie at 9–29 (AFAV…GAAF) and 79–99 (IQTV…VKAI).

It belongs to the MscL family. Homopentamer.

It localises to the cell inner membrane. Channel that opens in response to stretch forces in the membrane lipid bilayer. May participate in the regulation of osmotic pressure changes within the cell. The polypeptide is Large-conductance mechanosensitive channel (Pseudomonas syringae pv. tomato (strain ATCC BAA-871 / DC3000)).